We begin with the raw amino-acid sequence, 403 residues long: MQRERSMKRKRRRRGIKDMCNRHDCEIPPDLMIEILIRLPTKSFMRFKCVSKQWSPLISGRYFCNRLFTCVTRQQQQQPRLYMCLVAKDKQCVLLSSTSPDNTCFVLVDQDLSIPGYFFASVPGLLCFQFGTKACIYNPSTKQLLTLPSVKSDITAQQGQLKTTQYYIGRDPVNDQYKLVCTILIYSKLFANMSSEHWVFTLELGGSWKKVVPLGNYHPHAPATAGRSIDGVVHYLAWVDLYKCAVVSFNIRSEEVTTFLLPRKIWDVPVPALMMKADLIEYDGKLAIFSHSYLKDEGLVELWVLKDAAGKKKWSNMILVLQPCQRHLVHGIDLIVKGTTQDGKVILSPLEMRSQFYILCYDVQNNDLRKVEITGVPRLWLHKECNFDLKFMDESESFIYLEI.

Positions 21–71 (NRHDCEIPPDLMIEILIRLPTKSFMRFKCVSKQWSPLISGRYFCNRLFTCV) constitute an F-box domain.

This is F-box protein At2g40925 from Arabidopsis thaliana (Mouse-ear cress).